The primary structure comprises 1333 residues: Xanthine dehydrogenase/oxidase (1333 aa).

The 2Fe-2S ferredoxin-type domain occupies 4 to 91 (DKLVFFVNGR…HVAVTTVEGI (88 aa)). Cys43, Cys48, Cys51, Cys73, Cys113, Cys116, Cys148, and Cys150 together coordinate [2Fe-2S] cluster. Residues 229–414 (FEGERVTWIQ…LSIEIPYSRE (186 aa)) form the FAD-binding PCMH-type domain. FAD contacts are provided by residues 257 to 264 (LVVGNTEI), Phe337, 347 to 351 (SVGGN), Asp360, Leu404, and Lys422. Intrachain disulfides connect Cys509-Cys1318 and Cys536-Cys993. Mo-molybdopterin contacts are provided by Gln768 and Phe799. Residues Glu803 and Arg881 each contribute to the substrate site. Residue Arg913 coordinates Mo-molybdopterin. Positions 915 and 1011 each coordinate substrate. Residue Ala1080 coordinates Mo-molybdopterin. Glu1262 acts as the Proton acceptor in catalysis.

This sequence belongs to the xanthine dehydrogenase family. As to quaternary structure, homodimer. Interacts with BTN1A1. It depends on [2Fe-2S] cluster as a cofactor. FAD serves as cofactor. Mo-molybdopterin is required as a cofactor. In terms of processing, subject to partial proteolysis; this alters the enzyme from the dehydrogenase form (D) to the oxidase form (O). Contains sulfhydryl groups that are easily oxidized (in vitro); this alters the enzyme from the dehydrogenase form (D) to the oxidase form (O). In terms of tissue distribution, detected in milk (at protein level).

The protein localises to the cytoplasm. Its subcellular location is the peroxisome. It localises to the secreted. The catalysed reaction is xanthine + NAD(+) + H2O = urate + NADH + H(+). It catalyses the reaction hypoxanthine + NAD(+) + H2O = xanthine + NADH + H(+). It carries out the reaction xanthine + O2 + H2O = urate + H2O2. Its activity is regulated as follows. Can be converted from the dehydrogenase form (D) to the oxidase form (O) irreversibly by proteolysis or reversibly through the oxidation of sulfhydryl groups. Its function is as follows. Key enzyme in purine degradation. Catalyzes the oxidation of hypoxanthine to xanthine. Catalyzes the oxidation of xanthine to uric acid. Contributes to the generation of reactive oxygen species. Has also low oxidase activity towards aldehydes (in vitro). The sequence is that of Xanthine dehydrogenase/oxidase (XDH) from Homo sapiens (Human).